Here is a 178-residue protein sequence, read N- to C-terminus: ATP synthase subunit delta (178 aa).

This sequence belongs to the ATPase delta chain family. In terms of assembly, F-type ATPases have 2 components, F(1) - the catalytic core - and F(0) - the membrane proton channel. F(1) has five subunits: alpha(3), beta(3), gamma(1), delta(1), epsilon(1). F(0) has three main subunits: a(1), b(2) and c(10-14). The alpha and beta chains form an alternating ring which encloses part of the gamma chain. F(1) is attached to F(0) by a central stalk formed by the gamma and epsilon chains, while a peripheral stalk is formed by the delta and b chains.

It is found in the cell membrane. In terms of biological role, f(1)F(0) ATP synthase produces ATP from ADP in the presence of a proton or sodium gradient. F-type ATPases consist of two structural domains, F(1) containing the extramembraneous catalytic core and F(0) containing the membrane proton channel, linked together by a central stalk and a peripheral stalk. During catalysis, ATP synthesis in the catalytic domain of F(1) is coupled via a rotary mechanism of the central stalk subunits to proton translocation. Functionally, this protein is part of the stalk that links CF(0) to CF(1). It either transmits conformational changes from CF(0) to CF(1) or is implicated in proton conduction. The sequence is that of ATP synthase subunit delta from Geobacillus stearothermophilus (Bacillus stearothermophilus).